The chain runs to 718 residues: SANT and BTB domain regulator of class switch recombination (718 aa).

In terms of domain architecture, SANT spans Asp21–Lys59. The BTB domain maps to Met147–Met255. The span at Ser555–Glu576 shows a compositional bias: acidic residues. 2 disordered regions span residues Ser555 to Val622 and Arg690 to Ala718. The span at Lys580–Lys595 shows a compositional bias: basic residues. The segment covering Gln604–Ser615 has biased composition (basic and acidic residues).

Belongs to the KIAA1841 family. In terms of assembly, homodimer. Interacts (via the BTB domain) with HDAC1 and NCOR2.

Its function is as follows. Negatively regulates class switch recombination or isotype switching in splenic B-cells. The chain is SANT and BTB domain regulator of class switch recombination from Mus musculus (Mouse).